The primary structure comprises 30 residues: Propionyl-CoA carboxylase alpha chain (30 aa).

One can recognise a Biotin carboxylation domain in the interval 1-30; sequence PKIRKVLVANRGEIAIRVMRTXKELGIATV.

Dodecamer composed of six biotin-containing alpha subunits and six beta subunits. Requires Mg(2+) as cofactor. It depends on Mn(2+) as a cofactor. Biotin serves as cofactor.

The enzyme catalyses propanoyl-CoA + hydrogencarbonate + ATP = (S)-methylmalonyl-CoA + ADP + phosphate + H(+). It functions in the pathway metabolic intermediate metabolism; propanoyl-CoA degradation; succinyl-CoA from propanoyl-CoA: step 1/3. In terms of biological role, this is one of the 2 subunits of the biotin-dependent propionyl-CoA carboxylase (PCC), the enzyme catalyzing the carboxylation of propionyl-CoA/propanoyl-CoA to D-methylmalonyl-CoA/(S)-methylmalonyl-CoA. Within the holoenzyme, the alpha subunit catalyzes the ATP-dependent carboxylation of the biotin carried by the biotin carboxyl carrier (BCC) domain, while the beta subunit then transfers the carboxyl group from carboxylated biotin to propionyl-CoA. Propionyl-CoA carboxylase also carboxylates acetyl-CoA, butyryl-CoA and succinyl-CoA. The sequence is that of Propionyl-CoA carboxylase alpha chain from Myxococcus xanthus.